Reading from the N-terminus, the 270-residue chain is Interleukin-1 alpha (270 aa).

The propeptide occupies 1 to 112 (MAKVPDLFED…DTEEEIIKPR (112 aa)). Lys-82 carries the post-translational modification N6-acetyllysine. The tract at residues 82–86 (KKRRL) is nuclear localization signal (NLS). The residue at position 87 (Ser-87) is a Phosphoserine. Residues Asn-102 and Asn-141 are each glycosylated (N-linked (GlcNAc...) asparagine).

This sequence belongs to the IL-1 family. As to quaternary structure, monomer. Interacts with TMED10; the interaction mediates the translocation from the cytoplasm into the ERGIC (endoplasmic reticulum-Golgi intermediate compartment) and thereby secretion. Interacts with IL1R1. Interacts with S100A13; this interaction is the first step in the export of IL1A, followed by direct translocation of this complex across the plasma membrane. Acetylated within its nuclear localization sequence, which impacts subcellular localization. Post-translationally, proteolytic processed by CAPN1 in a calcium-dependent manner. Cleavage from 31 kDa precursor to 18 kDa biologically active molecules. In terms of processing, phosphorylated. Phosphorylation greatly enhances susceptibility to digestion and promotes the conversion of pre-IL1A alpha to the biologically active IL1A.

It is found in the nucleus. It localises to the cytoplasm. Its subcellular location is the secreted. In terms of biological role, cytokine constitutively present intracellularly in nearly all resting non-hematopoietic cells that plays an important role in inflammation and bridges the innate and adaptive immune systems. After binding to its receptor IL1R1 together with its accessory protein IL1RAP, forms the high affinity interleukin-1 receptor complex. Signaling involves the recruitment of adapter molecules such as MYD88, IRAK1 or IRAK4. In turn, mediates the activation of NF-kappa-B and the three MAPK pathways p38, p42/p44 and JNK pathways. Within the cell, acts as an alarmin and cell death results in its liberation in the extracellular space after disruption of the cell membrane to induce inflammation and alert the host to injury or damage. In addition to its role as a danger signal, which occurs when the cytokine is passively released by cell necrosis, directly senses DNA damage and acts as signal for genotoxic stress without loss of cell integrity. The polypeptide is Interleukin-1 alpha (IL1A) (Sus scrofa (Pig)).